A 520-amino-acid chain; its full sequence is 2-isopropylmalate synthase (520 aa).

The Pyruvate carboxyltransferase domain maps to Ile-12 to Val-274. Positions 21, 209, 211, and 245 each coordinate Mn(2+). Residues Arg-396–Ala-520 form a regulatory domain region.

This sequence belongs to the alpha-IPM synthase/homocitrate synthase family. LeuA type 1 subfamily. In terms of assembly, homodimer. The cofactor is Mn(2+).

It is found in the cytoplasm. The enzyme catalyses 3-methyl-2-oxobutanoate + acetyl-CoA + H2O = (2S)-2-isopropylmalate + CoA + H(+). Its pathway is amino-acid biosynthesis; L-leucine biosynthesis; L-leucine from 3-methyl-2-oxobutanoate: step 1/4. Its function is as follows. Catalyzes the condensation of the acetyl group of acetyl-CoA with 3-methyl-2-oxobutanoate (2-ketoisovalerate) to form 3-carboxy-3-hydroxy-4-methylpentanoate (2-isopropylmalate). This Xanthomonas axonopodis pv. citri (strain 306) protein is 2-isopropylmalate synthase.